The chain runs to 128 residues: Small ribosomal subunit protein uS11 (128 aa).

The protein belongs to the universal ribosomal protein uS11 family. As to quaternary structure, part of the 30S ribosomal subunit. Interacts with proteins S7 and S18. Binds to IF-3.

Located on the platform of the 30S subunit, it bridges several disparate RNA helices of the 16S rRNA. Forms part of the Shine-Dalgarno cleft in the 70S ribosome. In Vesicomyosocius okutanii subsp. Calyptogena okutanii (strain HA), this protein is Small ribosomal subunit protein uS11.